The sequence spans 137 residues: Large-conductance mechanosensitive channel (137 aa).

2 helical membrane passes run 9 to 29 (AFAV…GAAF) and 79 to 99 (IQTV…VKAI).

This sequence belongs to the MscL family. In terms of assembly, homopentamer.

The protein resides in the cell inner membrane. Channel that opens in response to stretch forces in the membrane lipid bilayer. May participate in the regulation of osmotic pressure changes within the cell. The sequence is that of Large-conductance mechanosensitive channel from Pseudomonas aeruginosa (strain ATCC 15692 / DSM 22644 / CIP 104116 / JCM 14847 / LMG 12228 / 1C / PRS 101 / PAO1).